The primary structure comprises 85 residues: Toxin BmKAEP (85 aa).

Residues 1–21 (MKLFLLLVISASMLIDGLVNA) form the signal peptide. Residues 22–82 (DGYIRGSNGC…TWKSESNTCG (61 aa)) enclose the LCN-type CS-alpha/beta domain. 4 cysteine pairs are disulfide-bonded: cysteine 31/cysteine 81, cysteine 35/cysteine 56, cysteine 42/cysteine 63, and cysteine 46/cysteine 65. Position 82 is a glycine amide (glycine 82).

In terms of tissue distribution, expressed by the venom gland.

Its subcellular location is the secreted. In terms of biological role, shows anti-epileptic activity. Shares high homology with depressant insect toxins, but shows very weak toxicity against mammals and insects and no obvious symptoms on insect larvae. May target voltage-gated sodium channel (Nav). This chain is Toxin BmKAEP, found in Olivierus martensii (Manchurian scorpion).